Reading from the N-terminus, the 296-residue chain is Aldo-keto reductase MYCFIDRAFT_156381 (296 aa).

Residue Asp14 coordinates NADP(+). The Proton donor role is filled by Tyr19. His83 serves as a coordination point for substrate. NADP(+)-binding positions include 113-114, Gln139, 168-178, and Arg191; these read CN and SPLAGGMLTDR. Tyr201 contacts substrate. Residue 255 to 263 coordinates NADP(+); the sequence is SSAEQLESN.

Belongs to the aldo/keto reductase family. Aldo/keto reductase 2 subfamily.

Its pathway is secondary metabolite biosynthesis. Its function is as follows. Aldo-keto reductase; part of the gene cluster that mediates the biosynthesis of an emodin derivative that may be involved in black Sigatoka disease of banana. The pathway begins with the synthesis of atrochrysone thioester by the polyketide synthase PKS8-1. The atrochrysone carboxyl ACP thioesterase MYCFIDRAFT_190111 then breaks the thioester bond and releases the atrochrysone carboxylic acid from PKS8-1. The decarboxylase MYCFIDRAFT_34057 then catalyzes the concerted decarboxylation-elimination required to convert atochrysone carboxylic acid into emodin anthrone, which is further oxidized to emodin by the anthrone oxygenase MYCFIDRAFT_34418. The functions of the other tailoring enzymes as well as the final product of the cluster have still to be identified. The sequence is that of Aldo-keto reductase MYCFIDRAFT_156381 from Pseudocercospora fijiensis (strain CIRAD86) (Black leaf streak disease fungus).